A 339-amino-acid polypeptide reads, in one-letter code: UPF0324 membrane protein SpyM3_0740 (339 aa).

9 helical membrane passes run 7–24, 28–50, 57–79, 84–106, 118–140, 150–172, 256–275, 290–307, and 314–336; these read KLPG…AWYL, FPII…FYHH, GISF…GLNL, AVGM…VAYG, ATLV…APVI, AISV…GQLL, FILF…SLGV, FIVM…LVKL, and AILL…QLSL.

This sequence belongs to the UPF0324 family.

It is found in the cell membrane. In Streptococcus pyogenes serotype M3 (strain ATCC BAA-595 / MGAS315), this protein is UPF0324 membrane protein SpyM3_0740.